Consider the following 256-residue polypeptide: Small ribosomal subunit protein uS2 (256 aa).

Residues 104-149 (NFKTISQRVHRLEELEALFASPEIEERPKKEQVRLKHELERLQKYL) adopt a coiled-coil conformation.

The protein belongs to the universal ribosomal protein uS2 family. Part of the 30S ribosomal subunit. Contacts protein S8.

In terms of biological role, spans the head-body hinge region of the 30S subunit. Is loosely associated with the 30S subunit. In Thermus thermophilus (strain ATCC BAA-163 / DSM 7039 / HB27), this protein is Small ribosomal subunit protein uS2 (rpsB).